Here is a 248-residue protein sequence, read N- to C-terminus: Phosphoribosylformylglycinamidine synthase subunit PurQ (248 aa).

Residues 6–248 (AMVLRMEGTN…IFFRILYNST (243 aa)) enclose the Glutamine amidotransferase type-1 domain. C95 (nucleophile) is an active-site residue. Catalysis depends on residues H215 and E217.

In terms of assembly, part of the FGAM synthase complex composed of 1 PurL, 1 PurQ and 2 PurS subunits.

It localises to the cytoplasm. It catalyses the reaction N(2)-formyl-N(1)-(5-phospho-beta-D-ribosyl)glycinamide + L-glutamine + ATP + H2O = 2-formamido-N(1)-(5-O-phospho-beta-D-ribosyl)acetamidine + L-glutamate + ADP + phosphate + H(+). The enzyme catalyses L-glutamine + H2O = L-glutamate + NH4(+). The protein operates within purine metabolism; IMP biosynthesis via de novo pathway; 5-amino-1-(5-phospho-D-ribosyl)imidazole from N(2)-formyl-N(1)-(5-phospho-D-ribosyl)glycinamide: step 1/2. Functionally, part of the phosphoribosylformylglycinamidine synthase complex involved in the purines biosynthetic pathway. Catalyzes the ATP-dependent conversion of formylglycinamide ribonucleotide (FGAR) and glutamine to yield formylglycinamidine ribonucleotide (FGAM) and glutamate. The FGAM synthase complex is composed of three subunits. PurQ produces an ammonia molecule by converting glutamine to glutamate. PurL transfers the ammonia molecule to FGAR to form FGAM in an ATP-dependent manner. PurS interacts with PurQ and PurL and is thought to assist in the transfer of the ammonia molecule from PurQ to PurL. This chain is Phosphoribosylformylglycinamidine synthase subunit PurQ, found in Picrophilus torridus (strain ATCC 700027 / DSM 9790 / JCM 10055 / NBRC 100828 / KAW 2/3).